Here is a 786-residue protein sequence, read N- to C-terminus: Leucine-rich repeat extensin-like protein 2 (786 aa).

The N-terminal stretch at 1-28 is a signal peptide; that stretch reads MLLFPSTSLRLFFFLFLLFSSCFLQIRG. Residues Asn73 and Asn79 are each glycosylated (N-linked (GlcNAc...) asparagine). LRR repeat units follow at residues 100–124, 125–147, 149–172, 173–196, 198–219, 221–243, 244–267, 268–291, and 292–315; these read TRVV…LGLL, TDLA…TFKH, KLLF…VLSL, PSLK…LFDK, LDAI…MGNS, VSAL…GLMG, KTLN…IGNL, KNVT…IGNM, and KSLE…ICQL. Residues Asn255 and Asn269 are each glycosylated (N-linked (GlcNAc...) asparagine). Asn320 and Asn346 each carry an N-linked (GlcNAc...) asparagine glycan. 4 disordered regions span residues 352–372, 390–589, 624–645, and 694–786; these read IDGK…SRSV, FKMS…YYAV, PPVY…YYPP, and PPPS…IPYY. Residues 353–362 show a composition bias toward basic and acidic residues; sequence DGKEDQRSSK. The contains the Ser-Pro(4) repeats stretch occupies residues 384 to 786; that stretch reads SPPPPSFKMS…SPPPPSIPYY (403 aa). Composition is skewed to pro residues over residues 460-477, 487-542, and 566-589; these read YPPP…PPPS, YPPP…PPPK, and SPPP…YYAV. 4 stretches are compositionally biased toward pro residues: residues 694 to 713, 720 to 737, 752 to 769, and 777 to 786; these read PPPS…PPST, PASP…PPPK, PTPP…PLPP, and SPPPPSIPYY.

In terms of processing, hydroxylated on proline residues in the S-P-P-P-P repeat. O-glycosylated on hydroxyprolines. As to expression, mostly expressed in roots, also present in stems at low levels. In roots, confined to differentiation zones, the collet, and meristematic cells of tips.

It localises to the secreted. The protein resides in the cell wall. Modulates cell morphogenesis by regulating cell wall formation and assembly, and/or growth polarization. Together with LRX2, component of the extracellular mechanism regulating root hair morphogenesis and elongation. This chain is Leucine-rich repeat extensin-like protein 2 (LRX2), found in Arabidopsis thaliana (Mouse-ear cress).